A 411-amino-acid chain; its full sequence is Imidazolonepropionase (411 aa).

Fe(3+) contacts are provided by histidine 75 and histidine 77. Positions 75 and 77 each coordinate Zn(2+). 3 residues coordinate 4-imidazolone-5-propanoate: arginine 84, tyrosine 147, and histidine 180. Position 147 (tyrosine 147) interacts with N-formimidoyl-L-glutamate. A Fe(3+)-binding site is contributed by histidine 245. Histidine 245 contributes to the Zn(2+) binding site. Glutamine 248 is a binding site for 4-imidazolone-5-propanoate. Residue aspartate 320 participates in Fe(3+) binding. A Zn(2+)-binding site is contributed by aspartate 320. Positions 322 and 324 each coordinate N-formimidoyl-L-glutamate. Threonine 325 contacts 4-imidazolone-5-propanoate.

The protein belongs to the metallo-dependent hydrolases superfamily. HutI family. Requires Zn(2+) as cofactor. It depends on Fe(3+) as a cofactor.

The protein localises to the cytoplasm. It catalyses the reaction 4-imidazolone-5-propanoate + H2O = N-formimidoyl-L-glutamate. The protein operates within amino-acid degradation; L-histidine degradation into L-glutamate; N-formimidoyl-L-glutamate from L-histidine: step 3/3. Functionally, catalyzes the hydrolytic cleavage of the carbon-nitrogen bond in imidazolone-5-propanoate to yield N-formimidoyl-L-glutamate. It is the third step in the universal histidine degradation pathway. This chain is Imidazolonepropionase, found in Aeromonas salmonicida (strain A449).